The following is a 119-amino-acid chain: Large ribosomal subunit protein uL24 (119 aa).

Belongs to the universal ribosomal protein uL24 family. In terms of assembly, part of the 50S ribosomal subunit.

Functionally, one of two assembly initiator proteins, it binds directly to the 5'-end of the 23S rRNA, where it nucleates assembly of the 50S subunit. In terms of biological role, one of the proteins that surrounds the polypeptide exit tunnel on the outside of the subunit. The polypeptide is Large ribosomal subunit protein uL24 (Arthrobacter sp. (strain FB24)).